The primary structure comprises 320 residues: o-succinylbenzoate synthase (320 aa).

Residue Lys133 is the Proton donor of the active site. Mg(2+)-binding residues include Asp161, Glu190, and Asp213. The active-site Proton acceptor is Lys235.

Belongs to the mandelate racemase/muconate lactonizing enzyme family. MenC type 1 subfamily. It depends on a divalent metal cation as a cofactor.

The enzyme catalyses (1R,6R)-6-hydroxy-2-succinyl-cyclohexa-2,4-diene-1-carboxylate = 2-succinylbenzoate + H2O. Its pathway is quinol/quinone metabolism; 1,4-dihydroxy-2-naphthoate biosynthesis; 1,4-dihydroxy-2-naphthoate from chorismate: step 4/7. It participates in quinol/quinone metabolism; menaquinone biosynthesis. In terms of biological role, converts 2-succinyl-6-hydroxy-2,4-cyclohexadiene-1-carboxylate (SHCHC) to 2-succinylbenzoate (OSB). The polypeptide is o-succinylbenzoate synthase (Salmonella arizonae (strain ATCC BAA-731 / CDC346-86 / RSK2980)).